The primary structure comprises 1436 residues: Probable deoxyribonuclease RhsB (1436 aa).

The interval 16-42 (HAGNRPNPPADRPQPCQGKPPTSPGKT) is disordered. 2 helical membrane passes run 48-68 (FLGALAGAVAGALVAAAVAAA) and 70-90 (VFLVGVTGGLAVAAVGALAVF). YD repeat units follow at residues 486 to 521 (YNTAHRLTRWHDNDQTWARYEYDAQGRCVYTTCADG), 569 to 605 (YDEVGNLLREISPAGRVVEFTYLDDTGRVSTFTDGSG), 612 to 647 (YDDAQRLCGVTDPLGREWGWVYDAEGNPERLTGPDA), 766 to 799 (DLLTARTDAEGRTWRYEYDRESQQLIAVTAPDGS), and 847 to 879 (YDARGLLLRETAPDDTLHYRYDAAGRLTEVSSA).

The protein belongs to the RHS/WapA nuclease family.

It localises to the membrane. Functionally, toxic component of a toxin-immunity protein module, which functions as a cellular contact-dependent growth inhibition (CDI) system. This protein may be a nuclease that is specifically inhibited by its cognate immunity protein RhsBI. Upon expression of the C-terminus (residues 1284-1436) in E.coli growth is inhibited, cells elongate, nucleoids condense and plasmid DNA is degraded; these effects are blocked specifically by cognate immunity protein RshIB. Cell contact is necessary for growth inhibition. The polypeptide is Probable deoxyribonuclease RhsB (rhsB) (Dickeya dadantii (strain 3937) (Erwinia chrysanthemi (strain 3937))).